The chain runs to 244 residues: Phosphoadenosine 5'-phosphosulfate reductase (244 aa).

C239 serves as the catalytic Nucleophile; cysteine thiosulfonate intermediate.

Belongs to the PAPS reductase family. CysH subfamily.

Its subcellular location is the cytoplasm. The catalysed reaction is [thioredoxin]-disulfide + sulfite + adenosine 3',5'-bisphosphate + 2 H(+) = [thioredoxin]-dithiol + 3'-phosphoadenylyl sulfate. The protein operates within sulfur metabolism; hydrogen sulfide biosynthesis; sulfite from sulfate: step 3/3. In terms of biological role, catalyzes the formation of sulfite from phosphoadenosine 5'-phosphosulfate (PAPS) using thioredoxin as an electron donor. This chain is Phosphoadenosine 5'-phosphosulfate reductase, found in Salmonella typhi.